Reading from the N-terminus, the 402-residue chain is MPDIGLEEVEVTEILVKIGEEIKLDQGLITVEGDKASMEIPSPISGIVKDITIKIGEKVKTSSIIMIFKVNNLNSIKNEKDLNYIKTEKKLNENFLEEKKDIKKIVLVHATPVVRRLARHLNVDLKNITPSGPKNRILKEDIELYIRNNTSNKSSFNIEKNNTTNFHKDLFNEIPITNIQQIIGKNLHQNWVNIPHVTQFDEVNITLLEEFRHKYNTEKKQKNNMCSKITILPFIIKSVAYGLLEFPIFNSSLSVNKKTIFLKKYVNVGIAVDVQNALFVPVLKNVDKKNIANLSSELIFLSKKAHENKLDASDMKDGCFTISNLGGIGGSWFSPIINSPEVAILGVSKALIKPLWNGKEFIPSLMLPLSLSYDHRVINGADAARFLTFIGKMLSDIRFLIM.

One can recognise a Lipoyl-binding domain in the interval 1 to 69; the sequence is MPDIGLEEVE…KTSSIIMIFK (69 aa). K35 carries the post-translational modification N6-lipoyllysine. The 38-residue stretch at 109 to 146 folds into the Peripheral subunit-binding (PSBD) domain; it reads HATPVVRRLARHLNVDLKNITPSGPKNRILKEDIELYI. The active site involves H375.

This sequence belongs to the 2-oxoacid dehydrogenase family. In terms of assembly, forms a 24-polypeptide structural core with octahedral symmetry. (R)-lipoate serves as cofactor.

It catalyses the reaction N(6)-[(R)-dihydrolipoyl]-L-lysyl-[protein] + acetyl-CoA = N(6)-[(R)-S(8)-acetyldihydrolipoyl]-L-lysyl-[protein] + CoA. Functionally, the pyruvate dehydrogenase complex catalyzes the overall conversion of pyruvate to acetyl-CoA and CO(2). It contains multiple copies of three enzymatic components: pyruvate dehydrogenase (E1), dihydrolipoamide acetyltransferase (E2) and lipoamide dehydrogenase (E3). This chain is Dihydrolipoyllysine-residue acetyltransferase component of pyruvate dehydrogenase complex (aceF), found in Buchnera aphidicola subsp. Schizaphis graminum (strain Sg).